The following is a 288-amino-acid chain: Alpha/beta hydrolase domain-containing protein 17B (288 aa).

Catalysis depends on charge relay system residues Ser170, Asp235, and His264. Position 282 is a phosphoserine (Ser282).

Belongs to the AB hydrolase superfamily. ABHD17 family. In terms of processing, palmitoylated on cysteine residues located in a cysteine cluster at the N-terminus which promotes membrane localization. Palmitoylation is required for post-synaptic localization and for depalmitoylating activity towards DLG4/PSD95. Expressed in brain.

The protein resides in the cell membrane. The protein localises to the recycling endosome membrane. Its subcellular location is the cell projection. It localises to the dendritic spine. It is found in the postsynaptic density membrane. The enzyme catalyses S-hexadecanoyl-L-cysteinyl-[protein] + H2O = L-cysteinyl-[protein] + hexadecanoate + H(+). In terms of biological role, hydrolyzes fatty acids from S-acylated cysteine residues in proteins. Has depalmitoylating activity towards DLG4/PSD95. Has depalmitoylating activity towards GAP43. Has depalmitoylating activity towards MAP6. Has depalmitoylating activity towards NRAS. The chain is Alpha/beta hydrolase domain-containing protein 17B from Mus musculus (Mouse).